A 150-amino-acid chain; its full sequence is Probable FKBP-type 16 kDa peptidyl-prolyl cis-trans isomerase (150 aa).

The PPIase FKBP-type domain occupies 14-88 (NTEVTLHFAL…PNPQNVQIIP (75 aa)).

It belongs to the FKBP-type PPIase family.

The catalysed reaction is [protein]-peptidylproline (omega=180) = [protein]-peptidylproline (omega=0). In terms of biological role, PPIases accelerate the folding of proteins. The protein is Probable FKBP-type 16 kDa peptidyl-prolyl cis-trans isomerase (yaaD) of Pseudomonas fluorescens.